Reading from the N-terminus, the 52-residue chain is Conotoxin Cal9.2d (52 aa).

The propeptide occupies 1 to 6 (KRGVTL). Disulfide bonds link Cys14–Cys31, Cys19–Cys41, and Cys21–Cys46.

As to expression, expressed by the venom duct.

The protein resides in the secreted. Probable neurotoxin with unknown target. Possibly targets ion channels. This chain is Conotoxin Cal9.2d, found in Californiconus californicus (California cone).